The sequence spans 119 residues: Beta-2-microglobulin (119 aa).

Positions 1–20 (MARFVVVALLVLLSVSDLEA) are cleaved as a signal peptide. In terms of domain architecture, Ig-like C1-type spans 25–114 (PKIQVYSRYP…VTFLTPKTVK (90 aa)). An intrachain disulfide couples C45 to C100.

This sequence belongs to the beta-2-microglobulin family. As to quaternary structure, heterodimer of an alpha chain and a beta chain. Beta-2-microglobulin is the beta-chain of major histocompatibility complex class I molecules.

The protein resides in the secreted. Its function is as follows. Component of the class I major histocompatibility complex (MHC). Involved in the presentation of peptide antigens to the immune system. The polypeptide is Beta-2-microglobulin (B2M) (Leontocebus fuscicollis (Brown-mantled tamarin)).